A 384-amino-acid chain; its full sequence is Guanine nucleotide-binding protein alpha-1 subunit (384 aa).

Residues 1 to 22 are disordered; sequence MGSLCSRNKHYSQADDEENTQT. Gly2 is lipidated: N-myristoyl glycine. A lipid anchor (S-palmitoyl cysteine) is attached at Cys5. Positions 38–384 constitute a G-alpha domain; that stretch reads HIQKLLLLGA…RRNLFEAGLL (347 aa). Residues 41–54 form a G1 motif region; the sequence is KLLLLGAGDSGKST. Positions 49, 50, 51, 52, 53, 54, 163, 188, 194, 222, 288, 289, 291, and 356 each coordinate GTP. A Mg(2+)-binding site is contributed by Ser53. The G2 motif stretch occupies residues 186 to 194; it reads DVLFARIRT. Thr194 is a binding site for Mg(2+). Residues 215-224 form a G3 motif region; that stretch reads YRLFDVGGQR. The G4 motif stretch occupies residues 284–291; it reads MLFLNKFD. Residues 354–359 form a G5 motif region; it reads TTALDQ.

This sequence belongs to the G-alpha family. As to quaternary structure, g proteins are composed of 3 units; alpha, beta and gamma. The alpha chain contains the guanine nucleotide binding site. It depends on Mg(2+) as a cofactor.

In terms of biological role, guanine nucleotide-binding proteins (G proteins) are involved as modulators or transducers in various transmembrane signaling systems. This chain is Guanine nucleotide-binding protein alpha-1 subunit (GPA1), found in Solanum tuberosum (Potato).